The primary structure comprises 194 residues: Peptidyl-tRNA hydrolase (194 aa).

A tRNA-binding site is contributed by Y17. Catalysis depends on H22, which acts as the Proton acceptor. The tRNA site is built by Y68, N70, and N116.

Belongs to the PTH family. As to quaternary structure, monomer.

The protein localises to the cytoplasm. The enzyme catalyses an N-acyl-L-alpha-aminoacyl-tRNA + H2O = an N-acyl-L-amino acid + a tRNA + H(+). Its function is as follows. Hydrolyzes ribosome-free peptidyl-tRNAs (with 1 or more amino acids incorporated), which drop off the ribosome during protein synthesis, or as a result of ribosome stalling. In terms of biological role, catalyzes the release of premature peptidyl moieties from peptidyl-tRNA molecules trapped in stalled 50S ribosomal subunits, and thus maintains levels of free tRNAs and 50S ribosomes. The chain is Peptidyl-tRNA hydrolase from Pseudomonas fluorescens (strain SBW25).